The primary structure comprises 249 residues: MNVLSCSINTLIKEGLYEISGVEVGQHFYWQIGGFQVHAQVLITSWVVIAILLGSAVLAIRNPQTIPTDGQNFFEFVLEFIRDVSKTQIGEEYGPWVPFIGTLFLFIFVSNWSGALLPWKIIQLPQGELAAPTNDINTTVALALLTSAAYFYAGLSKKGLGYFSKYIQPTPILLPINILEDFTKPLSLSFRLFGNILADELVVVVLVSLVPLVVPIPVMFLGLFTSGIQALIFATLAAAYIGESMEGHH.

Helical transmembrane passes span 40 to 60 (QVLI…VLAI), 97 to 117 (VPFI…GALL), 136 to 156 (INTT…AGLS), 201 to 221 (LVVV…VMFL), and 222 to 242 (GLFT…AYIG).

This sequence belongs to the ATPase A chain family. F-type ATPases have 2 components, CF(1) - the catalytic core - and CF(0) - the membrane proton channel. CF(1) has five subunits: alpha(3), beta(3), gamma(1), delta(1), epsilon(1). CF(0) has four main subunits: a, b, b' and c.

The protein resides in the plastid. The protein localises to the chloroplast thylakoid membrane. Its function is as follows. Key component of the proton channel; it plays a direct role in the translocation of protons across the membrane. The sequence is that of ATP synthase subunit a, chloroplastic from Capsella bursa-pastoris (Shepherd's purse).